Consider the following 260-residue polypeptide: Type III pantothenate kinase (260 aa).

ATP is bound at residue 6–13 (DAGNTRTK). Residues Tyr88 and 95-98 (GVDR) contribute to the substrate site. Asp97 serves as the catalytic Proton acceptor. Position 121 (Ser121) interacts with ATP. Thr184 contacts substrate.

The protein belongs to the type III pantothenate kinase family. Homodimer. It depends on NH4(+) as a cofactor. Requires K(+) as cofactor.

It is found in the cytoplasm. It catalyses the reaction (R)-pantothenate + ATP = (R)-4'-phosphopantothenate + ADP + H(+). It functions in the pathway cofactor biosynthesis; coenzyme A biosynthesis; CoA from (R)-pantothenate: step 1/5. In terms of biological role, catalyzes the phosphorylation of pantothenate (Pan), the first step in CoA biosynthesis. The chain is Type III pantothenate kinase from Saccharophagus degradans (strain 2-40 / ATCC 43961 / DSM 17024).